A 523-amino-acid chain; its full sequence is Apoptosis inhibitor 5 (523 aa).

The interval 1–360 (MPTVEELYRN…HQLGRKLPDF (360 aa)) is ARM-like and Heat-like helical repeats. Residues 446 to 523 (VQKADANQKR…RGNRSRGRIY (78 aa)) form a disordered region. The short motif at 454–475 (KRTSEDTTSSSPPKKASAGPKR) is the Nuclear localization signal element. The segment covering 460–471 (TTSSSPPKKASA) has biased composition (low complexity). Over residues 487–497 (KYSSNLGSFSY) the composition is skewed to polar residues. The segment covering 502-515 (GFRGGRGRGWGGRG) has biased composition (gly residues).

Belongs to the API5 family. In terms of assembly, monomer.

The protein localises to the nucleus. It localises to the cytoplasm. Functionally, antiapoptotic factor that may have a role in protein assembly. The polypeptide is Apoptosis inhibitor 5 (API5) (Gallus gallus (Chicken)).